We begin with the raw amino-acid sequence, 547 residues long: Chaperonin GroEL (547 aa).

ATP-binding positions include 30 to 33, lysine 51, 87 to 91, glycine 415, and aspartate 495; these read TLGP and DGTTT.

It belongs to the chaperonin (HSP60) family. In terms of assembly, forms a cylinder of 14 subunits composed of two heptameric rings stacked back-to-back. Interacts with the co-chaperonin GroES.

It is found in the cytoplasm. The catalysed reaction is ATP + H2O + a folded polypeptide = ADP + phosphate + an unfolded polypeptide.. Functionally, together with its co-chaperonin GroES, plays an essential role in assisting protein folding. The GroEL-GroES system forms a nano-cage that allows encapsulation of the non-native substrate proteins and provides a physical environment optimized to promote and accelerate protein folding. This Allorhizobium ampelinum (strain ATCC BAA-846 / DSM 112012 / S4) (Agrobacterium vitis (strain S4)) protein is Chaperonin GroEL.